The primary structure comprises 721 residues: Solute carrier family 12 member 8 (721 aa).

11 helical membrane passes run 53-73 (FGTWDGVFTSCMINIFGVVLF), 84-104 (GVLLGIVLVSFVILVALVTVL), 115-135 (IGSGGVYSMVSTVLGGKVGGT), 136-156 (IGVLYIFGQCVAGAMYITGFA), 174-194 (ISLAVLVGLLGINLAGVKWII), 196-216 (LQLLLFLLLAVSTLDFVIGSF), 247-267 (FFTVFGVFFPAATGVMVGFNM), 283-303 (LAAIGTSWFLYVVFVFLLGAI), 321-341 (LVGGLFLLGLYISSLASCMGG), 374-394 (PVAAIFITGLLTMAFVFIGQV), and 397-417 (LAPIVTINFMLTYSAVDYSYF). Disordered regions lie at residues 473-505 (PNHTEAPESTSSQEKDPKMFKFSKPRKPAKQTL) and 533-580 (NESQ…STVA). Residues 553-565 (TESDEPDSEEDVD) show a composition bias toward acidic residues. 2 helical membrane passes run 606 to 626 (FLGAILSIVIMFVIQWIYALV) and 628 to 648 (LGVAIILYLYIGRVNPGLNPG).

Belongs to the SLC12A transporter family.

Its subcellular location is the membrane. Cation/chloride cotransporter. This is Solute carrier family 12 member 8 (slc12a8) from Xenopus laevis (African clawed frog).